The sequence spans 234 residues: SPX domain-containing protein 6 (234 aa).

In terms of domain architecture, SPX spans 1–137; the sequence is MKFGKLLKRQ…GGALAAPVAE (137 aa). Residues 202-234 form a disordered region; it reads GSSTHGRHSLPPLTLPDSDWLRSFQPPSPIPIQ.

Predominantly expressed in roots and leaves.

Functionally, may be involved in maintaining cellular Pi homeostasis when plants are exposed to an external change in Pi. The chain is SPX domain-containing protein 6 from Oryza sativa subsp. japonica (Rice).